Here is an 848-residue protein sequence, read N- to C-terminus: Nuclear cap-binding protein subunit 1 (848 aa).

An MIF4G domain is found at 8–228 (LLRIGEKGPE…DLLDRIQSLA (221 aa)). Residues 767-786 (EDDKPSAMDVDSENGNPKKS) are disordered.

This sequence belongs to the NCBP1 family. Component of the nuclear cap-binding complex (CBC), a heterodimer composed of ABH1/CBP80 and CBP20 that interacts with m7GpppG-capped RNA. As to expression, expressed in all tissues analyzed, including roots, stems, leaves and flowers.

The protein resides in the nucleus. It localises to the cytoplasm. Component of the cap-binding complex (CBC), which binds cotranscriptionally to the 5'-cap of pre-mRNAs and is involved in various processes such as pre-mRNA splicing and RNA-mediated gene silencing (RNAi) by microRNAs (miRNAs). The CBC complex is involved in miRNA-mediated RNA interference and is required for primary miRNA processing. In the CBC complex, ABH1/CBP80 does not bind directly capped RNAs (m7GpppG-capped RNA) but is required to stabilize the movement of the N-terminal loop of CBP20 and lock the CBC into a high affinity cap-binding state with the cap structure. Involved in flowering regulation, possibly by regulating pre-mRNA splicing of FLC gene. Acts as a negative regulator of abscisic acid signaling in guard cells. In Arabidopsis thaliana (Mouse-ear cress), this protein is Nuclear cap-binding protein subunit 1 (ABH1).